We begin with the raw amino-acid sequence, 563 residues long: MSDDAGDTLATGDKAEVTEMPNSDSLPEDAEVHCDSAAVSHEPTPADPRGEGHENAAVQGAGAAAIGPPVQPQDANALEPPLNGDVTEDTLAECIDSVSLEAEPRSEIPLQEQNYLAVDSPPSGGGWAGWGSWGKSLLSSASATVGHGLTAVKEKAGATLRIHGVNSGSSEGAQPNTENGVPEITDAATDQGPAESPPTSPSSASRGMLSAITNVVQNTGKSVLTGGLDALEFIGKKTMNVLAESDPGFKRTKTLMERTVSLSQMLREAKEKEKQRLAQQLTMERTAHYGMLFDEYQGLSHLEALEILSNESESKVQSFLASLDGEKLELLKNDLISIKDIFAAKELENEENQEEQGLEEKGEEFARMLTELLFELHVAATPDKLNKAMKRAHDWVEEDQTVVSVDVAKVSEEETKKEEKEEKSQDPQEDKKEEKKTKTIEEVYMSSIESLAEVTARCIEQLHKVAELILHGQEEEKPAQDQAKVLIKLTTAMCNEVASLSKKFTNSLTTVGSNKKAEVLNPMISSVLLEGCNSTTYIQDAFQLLLPVLQVSHIQTSCLKAQP.

The interval 1-84 is disordered; sequence MSDDAGDTLA…ANALEPPLNG (84 aa). The span at 56–68 shows a compositional bias: low complexity; that stretch reads AAVQGAGAAAIGP. Phosphoserine is present on serine 120. Positions 165–206 are disordered; the sequence is VNSGSSEGAQPNTENGVPEITDAATDQGPAESPPTSPSSASR. Polar residues predominate over residues 166-179; the sequence is NSGSSEGAQPNTEN. Threonine 185 and threonine 189 each carry phosphothreonine. Residue serine 196 is modified to Phosphoserine. Threonine 199 is modified (phosphothreonine). Serine 202 and serine 261 each carry phosphoserine. A coiled-coil region spans residues 343-367; the sequence is AAKELENEENQEEQGLEEKGEEFAR. The interval 411–436 is disordered; it reads SEEETKKEEKEEKSQDPQEDKKEEKK.

The protein belongs to the FAM114 family.

It is found in the cytoplasm. Functionally, may play a role in neuronal cell development. This is Protein NOXP20 (FAM114A1) from Homo sapiens (Human).